Here is a 373-residue protein sequence, read N- to C-terminus: Erythronate-4-phosphate dehydrogenase (373 aa).

Substrate-binding residues include S45 and T67. NAD(+) is bound by residues D147, A206–R208, and D232. R208 is a catalytic residue. The active site involves E237. Residue H254 is the Proton donor of the active site. G257 lines the NAD(+) pocket. Position 258 (Y258) interacts with substrate.

It belongs to the D-isomer specific 2-hydroxyacid dehydrogenase family. PdxB subfamily. Homodimer.

Its subcellular location is the cytoplasm. It carries out the reaction 4-phospho-D-erythronate + NAD(+) = (R)-3-hydroxy-2-oxo-4-phosphooxybutanoate + NADH + H(+). The protein operates within cofactor biosynthesis; pyridoxine 5'-phosphate biosynthesis; pyridoxine 5'-phosphate from D-erythrose 4-phosphate: step 2/5. Functionally, catalyzes the oxidation of erythronate-4-phosphate to 3-hydroxy-2-oxo-4-phosphonooxybutanoate. This is Erythronate-4-phosphate dehydrogenase from Tolumonas auensis (strain DSM 9187 / NBRC 110442 / TA 4).